A 431-amino-acid chain; its full sequence is CinA-like protein (431 aa).

The protein belongs to the CinA family.

The polypeptide is CinA-like protein (Chlorobium luteolum (strain DSM 273 / BCRC 81028 / 2530) (Pelodictyon luteolum)).